The primary structure comprises 345 residues: S-adenosylmethionine:tRNA ribosyltransferase-isomerase (345 aa).

It belongs to the QueA family. As to quaternary structure, monomer.

The protein localises to the cytoplasm. The enzyme catalyses 7-aminomethyl-7-carbaguanosine(34) in tRNA + S-adenosyl-L-methionine = epoxyqueuosine(34) in tRNA + adenine + L-methionine + 2 H(+). It functions in the pathway tRNA modification; tRNA-queuosine biosynthesis. Its function is as follows. Transfers and isomerizes the ribose moiety from AdoMet to the 7-aminomethyl group of 7-deazaguanine (preQ1-tRNA) to give epoxyqueuosine (oQ-tRNA). The sequence is that of S-adenosylmethionine:tRNA ribosyltransferase-isomerase from Anaeromyxobacter sp. (strain K).